Consider the following 504-residue polypeptide: Putative F-box/FBD/LRR-repeat protein At3g59240 (504 aa).

An F-box domain is found at 7–60; it reads KDIISDLPEALICHLLSFVPTKEAALTSLLSEKWRYLFAFAPILDFDDSVWMQS. LRR repeat units follow at residues 69 to 95, 145 to 171, 173 to 198, 286 to 312, 329 to 354, 369 to 396, and 403 to 428; these read HRKFMDFVDRVLGLQGNSTLVRFSLNC, RIRTENCTIIDLEDVFLPKLKTLDLSS, WFRDGDTCLLKLISGCQVLEDLTMSD, TNLFMGISNVRILQLFSNALEVLTFCC, DKDVGWESLPALLKNCPNLETLVFKG, CLCKSSKDIRSCLSSSPVKVLKILKFGE, and DEEKQLELVKYFLETMPNLEQMILHY. Residues 382 to 427 enclose the FBD domain; sequence SSSPVKVLKILKFGEVASYFGDEEKQLELVKYFLETMPNLEQMILH.

This chain is Putative F-box/FBD/LRR-repeat protein At3g59240, found in Arabidopsis thaliana (Mouse-ear cress).